The sequence spans 350 residues: Ferredoxin--NADP reductase (350 aa).

Positions 22, 41, 49, 54, 94, 129, 295, and 336 each coordinate FAD.

This sequence belongs to the ferredoxin--NADP reductase type 2 family. Homodimer. FAD is required as a cofactor.

It carries out the reaction 2 reduced [2Fe-2S]-[ferredoxin] + NADP(+) + H(+) = 2 oxidized [2Fe-2S]-[ferredoxin] + NADPH. The sequence is that of Ferredoxin--NADP reductase from Chlorobium luteolum (strain DSM 273 / BCRC 81028 / 2530) (Pelodictyon luteolum).